Here is a 237-residue protein sequence, read N- to C-terminus: DCN1-like protein 5 (237 aa).

At S41 the chain carries Phosphoserine. Residues 46 to 232 (FSRKKCLAWF…LLDEFVEWQK (187 aa)) form the DCUN1 domain.

As to quaternary structure, part of a complex that contains DCUN1D5, CUL1 and RBX1; this interaction is bridged by CUL1. Interacts (via the DCUN1 domain) with the unneddylated cullins: interacts with CUL1, CUL2, CUL3, CUL4A, CUL4B and CUL5; these interactions promote the cullin neddylation and the identity of the cullin dictates the affinity of the interaction. Interacts (via DCUN1 domain) with UBE2M (N-terminally acetylated form) and probably with UBE2F (N-terminally acetylated form). May also interact with regulators or subunits of cullin-RING ligases such as RBX1, RNF7, ELOB and DDB1; these interactions are bridged by cullins. Interacts with CAND1; this interaction is bridged by cullins and strongly inhibits the neddylation of cullins. These CAND-cullin-DCNL complexes can only be neddylated in the presence of a substrate adapter. Phosphorylation at Ser-41 is independent of cullin's interaction. Phosphorylated in response to both TICAM1 and MYD88 dependent Toll-like receptor (TLR) pathway activation. Phosphorylated in response to IL1B stimulation.

The protein localises to the nucleus. It localises to the cytoplasm. Its subcellular location is the cytoskeleton. The protein resides in the spindle. Its function is as follows. Contributes to the neddylation of all cullins by transferring NEDD8 from N-terminally acetylated NEDD8-conjugating E2s enzyme to different cullin C-terminal domain-RBX complexes which is necessary for the activation of cullin-RING E3 ubiquitin ligases (CRLs). May play a role in DNA damage response and may participate in cell proliferation and anchorage-independent cell growth. This chain is DCN1-like protein 5, found in Rattus norvegicus (Rat).